A 404-amino-acid chain; its full sequence is DNA replication and repair protein RecF (404 aa).

30–37 is an ATP binding site; the sequence is GSNGQGKT.

The protein belongs to the RecF family.

The protein localises to the cytoplasm. Functionally, the RecF protein is involved in DNA metabolism; it is required for DNA replication and normal SOS inducibility. RecF binds preferentially to single-stranded, linear DNA. It also seems to bind ATP. This Clavibacter michiganensis subsp. michiganensis (strain NCPPB 382) protein is DNA replication and repair protein RecF.